A 135-amino-acid polypeptide reads, in one-letter code: Small ribosomal subunit protein bS16 (135 aa).

Positions Thr106–Ala135 are disordered. Positions Arg109–Ala122 are enriched in basic residues.

The protein belongs to the bacterial ribosomal protein bS16 family.

In Chlorobium phaeobacteroides (strain DSM 266 / SMG 266 / 2430), this protein is Small ribosomal subunit protein bS16.